Here is a 287-residue protein sequence, read N- to C-terminus: 4,4'-diapophytoene synthase (287 aa).

(2E,6E)-farnesyl diphosphate is bound by residues 18–21 (HSKS), tyrosine 41, and arginine 45. Mg(2+)-binding residues include aspartate 48 and aspartate 52. Glutamine 165 is a binding site for (2E,6E)-farnesyl diphosphate. Asparagine 168 lines the Mg(2+) pocket. A (2E,6E)-farnesyl diphosphate-binding site is contributed by arginine 171. Aspartate 172 is a binding site for Mg(2+). Tyrosine 248 contributes to the (2E,6E)-farnesyl diphosphate binding site.

This sequence belongs to the phytoene/squalene synthase family. CrtM subfamily. Mg(2+) serves as cofactor.

The catalysed reaction is 2 (2E,6E)-farnesyl diphosphate = 15-cis-4,4'-diapophytoene + 2 diphosphate. It participates in carotenoid biosynthesis; staphyloxanthin biosynthesis; staphyloxanthin from farnesyl diphosphate: step 1/5. Involved in the biosynthesis of the yellow-orange carotenoid staphyloxanthin, which plays a role in the virulence via its protective function against oxidative stress. Catalyzes the head-to-head condensation of two molecules of farnesyl diphosphate (FPP) into the colorless C(30) carotenoid 4,4'-diapophytoene (dehydrosqualene). This is 4,4'-diapophytoene synthase from Staphylococcus aureus.